The following is a 425-amino-acid chain: Glucose-1-phosphate adenylyltransferase (425 aa).

Residues tyrosine 114, glycine 179, 194 to 195 (EK), and serine 212 contribute to the alpha-D-glucose 1-phosphate site.

It belongs to the bacterial/plant glucose-1-phosphate adenylyltransferase family. In terms of assembly, homotetramer.

It catalyses the reaction alpha-D-glucose 1-phosphate + ATP + H(+) = ADP-alpha-D-glucose + diphosphate. Its pathway is glycan biosynthesis; glycogen biosynthesis. Functionally, involved in the biosynthesis of ADP-glucose, a building block required for the elongation reactions to produce glycogen. Catalyzes the reaction between ATP and alpha-D-glucose 1-phosphate (G1P) to produce pyrophosphate and ADP-Glc. The protein is Glucose-1-phosphate adenylyltransferase of Pectobacterium carotovorum subsp. carotovorum (strain PC1).